Here is a 695-residue protein sequence, read N- to C-terminus: Putative ATP-dependent DNA helicase R568 (695 aa).

In terms of domain architecture, UvrD-like helicase ATP-binding spans 86–499 (KFSEEQIKYI…FRNEEIFDSN (414 aa)). 107–114 (ACAGSGKT) provides a ligand contact to ATP.

It belongs to the helicase family. UvrD subfamily.

The catalysed reaction is Couples ATP hydrolysis with the unwinding of duplex DNA by translocating in the 3'-5' direction.. The enzyme catalyses ATP + H2O = ADP + phosphate + H(+). ATP-dependent DNA helicase. This Acanthamoeba polyphaga mimivirus (APMV) protein is Putative ATP-dependent DNA helicase R568.